The sequence spans 317 residues: SVP1-like protein 2 (317 aa).

WD repeat units follow at residues 119-159 and 164-203; these read AHST…KMAE and VDHA…NAPY.

It belongs to the WD repeat PROPPIN family.

The protein resides in the vacuole membrane. It is found in the cytoplasmic vesicle membrane. Involved in mitochondrial or peroxisomal functions and amino acid signaling pathways. This chain is SVP1-like protein 2 (hsv2), found in Emericella nidulans (strain FGSC A4 / ATCC 38163 / CBS 112.46 / NRRL 194 / M139) (Aspergillus nidulans).